The primary structure comprises 406 residues: Eukaryotic initiation factor 4A-I (406 aa).

The segment at 1-21 (MSASQDSRSRDNGPDGMEPEG) is disordered. N-acetylserine is present on S2. S4 bears the Phosphoserine mark. The Q motif signature appears at 32 to 60 (DSFDDMNLSESLLRGIYAYGFEKPSAIQQ). The Helicase ATP-binding domain occupies 63 to 234 (ILPCIKGYDV…KKFMRDPIRI (172 aa)). 76–83 (AQSGTGKT) is a binding site for ATP. Position 118 is an N6-acetyllysine (K118). A Glycyl lysine isopeptide (Lys-Gly) (interchain with G-Cter in SUMO2) cross-link involves residue K146. Phosphothreonine is present on T158. At K174 the chain carries N6-acetyllysine. A DEAD box motif is present at residues 182–185 (DEAD). An N6-acetyllysine modification is found at K193. A Glycyl lysine isopeptide (Lys-Gly) (interchain with G-Cter in SUMO2) cross-link involves residue K225. K238 carries the N6-acetyllysine; alternate modification. K238 participates in a covalent cross-link: Glycyl lysine isopeptide (Lys-Gly) (interchain with G-Cter in SUMO2); alternate. The Helicase C-terminal domain maps to 245 to 406 (GIRQFYINVE…EMPLNVADLI (162 aa)). Glycyl lysine isopeptide (Lys-Gly) (interchain with G-Cter in SUMO2) cross-links involve residues K309, K369, and K381.

This sequence belongs to the DEAD box helicase family. eIF4A subfamily. EIF4F is a multi-subunit complex, the composition of which varies with external and internal environmental conditions. It is composed of at least EIF4A, EIF4E and EIF4G1/EIF4G3. Interacts with PAIP1, EIF4E and UPF2. Found in a complex with XPO7, EIF4A1, ARHGAP1, VPS26A, VPS29, VPS35 and SFN. May interact with NOM1. Interacts with PDCD4; this interferes with the interaction between EIF4A and EIF4G. Interacts with RBM4. Interacts with DDX3X in an RNA-independent manner. Interacts with PKP1 (via N-terminus); the interaction promotes EIF4A1 recruitment to the cap-dependent translation complex and EIF4A1 ATPase activity.

The protein resides in the cytoplasm. It localises to the perinuclear region. It is found in the cell membrane. The protein localises to the stress granule. The enzyme catalyses ATP + H2O = ADP + phosphate + H(+). Functionally, ATP-dependent RNA helicase which is a subunit of the eIF4F complex involved in cap recognition and is required for mRNA binding to ribosome. In the current model of translation initiation, eIF4A unwinds RNA secondary structures in the 5'-UTR of mRNAs which is necessary to allow efficient binding of the small ribosomal subunit, and subsequent scanning for the initiator codon. As a result, promotes cell proliferation and growth. The polypeptide is Eukaryotic initiation factor 4A-I (EIF4A1) (Macaca fascicularis (Crab-eating macaque)).